A 502-amino-acid chain; its full sequence is Nostrin (502 aa).

The 260-residue stretch at 1-260 (MRDPLTDCSY…AISKVDVEKD (260 aa)) folds into the F-BAR domain. Ser114 bears the Phosphoserine mark. Coiled-coil stretches lie at residues 160–230 (SMTQ…LNQY) and 305–335 (KLWR…SSAS). The region spanning 292 to 372 (PMDKERRKSL…SYKLSTVLAD (81 aa)) is the REM-1 domain. The disordered stretch occupies residues 413–437 (KAESKAPAGEQNNPSSSRPGSSVSQ). A compositionally biased stretch (low complexity) spans 423–437 (QNNPSSSRPGSSVSQ). The SH3 domain occupies 438-497 (GNNQLCKALYTFQARQDDELNLEKGDIVTIHEKKEEGWWFGSLNGKKGHFPAAYVEELPP). Ser479 is subject to Phosphoserine.

In terms of assembly, homotrimer. Interacts with DAB2. Interacts with NOS3, WASL and CAV1. Interacts (via SH3 domain) with DNM2; this interaction allows the recruitment of NOS3 to dynamin-positive structures. As to expression, over-expressed in brain microcapillaries from spontaneously hypertensive rats.

The protein resides in the cell membrane. It localises to the cytoplasmic vesicle. Its subcellular location is the cytoplasm. The protein localises to the cytoskeleton. It is found in the nucleus. Functionally, multivalent adapter protein which may decrease NOS3 activity by inducing its translocation away from the plasma membrane. The protein is Nostrin of Rattus norvegicus (Rat).